The sequence spans 488 residues: Ribulose bisphosphate carboxylase large chain (488 aa).

Substrate contacts are provided by Asn127 and Thr177. Lys179 serves as the catalytic Proton acceptor. Residue Lys181 coordinates substrate. Lys205, Asp207, and Glu208 together coordinate Mg(2+). An N6-carboxylysine modification is found at Lys205. Catalysis depends on His297, which acts as the Proton acceptor. 3 residues coordinate substrate: Arg298, His330, and Ser382.

Belongs to the RuBisCO large chain family. Type I subfamily. As to quaternary structure, heterohexadecamer of 8 large chains and 8 small chains. Mg(2+) serves as cofactor.

Its subcellular location is the plastid. The protein resides in the chloroplast. The enzyme catalyses 2 (2R)-3-phosphoglycerate + 2 H(+) = D-ribulose 1,5-bisphosphate + CO2 + H2O. It catalyses the reaction D-ribulose 1,5-bisphosphate + O2 = 2-phosphoglycolate + (2R)-3-phosphoglycerate + 2 H(+). RuBisCO catalyzes two reactions: the carboxylation of D-ribulose 1,5-bisphosphate, the primary event in carbon dioxide fixation, as well as the oxidative fragmentation of the pentose substrate in the photorespiration process. Both reactions occur simultaneously and in competition at the same active site. The protein is Ribulose bisphosphate carboxylase large chain of Olisthodiscus luteus (Marine phytoflagellate).